Reading from the N-terminus, the 961-residue chain is DNA repair endonuclease XPF (961 aa).

Disordered stretches follow at residues 1–27 (MADSCAENAAKGTENERPKEVEASADT), 451–485 (NYAKESQTRSAPPKNVSSNKELRREEVSGSQPPLA), and 674–693 (PTDENAKSRQAGGQAPQATK). Basic and acidic residues predominate over residues 13–22 (TENERPKEVE). Residues 458 to 469 (TRSAPPKNVSSN) show a composition bias toward polar residues. An ERCC4 domain is found at 697–777 (KVIVDMREFR…KPILLIEFDQ (81 aa)).

The protein belongs to the XPF family. Heterodimer. Interacts with hdm.

It is found in the nucleus. Its function is as follows. Implicated in recombination events during meiosis, mostly in meiotic exchange. May directly resolve Holliday junctions within recombination intermediates leading to DNA exchange. Also required for the repair of mismatches within meiotic heteroduplex DNA and for nucleotide excision repair. The protein is DNA repair endonuclease XPF (mei-9) of Drosophila melanogaster (Fruit fly).